A 347-amino-acid chain; its full sequence is MTNKTSLSYKDAGVDIDAGNDLVDRIKGVVKQTRRPEVMGGLGGFGALCALPQKYREPILVSGTDGVGTKLRLAMDLKRHDTIGIDLVAMCVNDLVVQGAEPLFFLDYFATGKLDVDTAASVITGIAEGCKQSGCALVGGETAEMPGMYHGEDYDVAGFCVGVVEKSEIIDGSKVAPGDALVALGASGPHSNGYSLVRKILEVSNTDPEQTQLDGKSLADHLLEPTKIYVKSILSLIEQLDIHAIAHLTGGGFWENIPRVLPQGTQAVIDEASWQWPAVFSWLQETGNVSRHEMYRTFNCGVGMVVALPAELADKAVELLTASGEKAWKIGVIAAAAEGAEQVIINP.

This sequence belongs to the AIR synthase family.

It is found in the cytoplasm. The enzyme catalyses 2-formamido-N(1)-(5-O-phospho-beta-D-ribosyl)acetamidine + ATP = 5-amino-1-(5-phospho-beta-D-ribosyl)imidazole + ADP + phosphate + H(+). The protein operates within purine metabolism; IMP biosynthesis via de novo pathway; 5-amino-1-(5-phospho-D-ribosyl)imidazole from N(2)-formyl-N(1)-(5-phospho-D-ribosyl)glycinamide: step 2/2. This is Phosphoribosylformylglycinamidine cyclo-ligase from Yersinia enterocolitica serotype O:8 / biotype 1B (strain NCTC 13174 / 8081).